We begin with the raw amino-acid sequence, 364 residues long: Probable endopolygalacturonase B (364 aa).

The signal sequence occupies residues 1 to 20 (MHFFQSSLVAATMGAALVAA). The propeptide occupies 21 to 29 (APAADLETR). Residues cysteine 32 and cysteine 47 are joined by a disulfide bond. 2 N-linked (GlcNAc...) asparagine glycosylation sites follow: asparagine 138 and asparagine 141. 6 PbH1 repeats span residues 159–188 (SDHL…DVGS), 189–210 (STYI…AVNS), 211–231 (GEHI…SIGS), 240–261 (VNDV…RIKT), 269–291 (VTGV…VVQQ), and 303–324 (TNGV…TSSA). Aspartate 203 functions as the Proton donor in the catalytic mechanism. Cysteine 205 and cysteine 221 are joined by a disulfide. Histidine 225 is a catalytic residue. A disulfide bridge connects residues cysteine 331 and cysteine 336. An N-linked (GlcNAc...) asparagine glycan is attached at asparagine 338. A disulfide bond links cysteine 355 and cysteine 364.

Belongs to the glycosyl hydrolase 28 family.

The protein resides in the secreted. It catalyses the reaction (1,4-alpha-D-galacturonosyl)n+m + H2O = (1,4-alpha-D-galacturonosyl)n + (1,4-alpha-D-galacturonosyl)m.. In terms of biological role, involved in maceration and soft-rotting of plant tissue. Hydrolyzes the 1,4-alpha glycosidic bonds of de-esterified pectate in the smooth region of the plant cell wall. The chain is Probable endopolygalacturonase B (pgaB) from Aspergillus fumigatus (strain ATCC MYA-4609 / CBS 101355 / FGSC A1100 / Af293) (Neosartorya fumigata).